The following is a 231-amino-acid chain: Acyl-protein thioesterase 1 (231 aa).

Active-site charge relay system residues include S121, D178, and H211.

This sequence belongs to the AB hydrolase superfamily. AB hydrolase 2 family.

The protein localises to the cytoplasm. The protein resides in the nucleus. The enzyme catalyses S-hexadecanoyl-L-cysteinyl-[protein] + H2O = L-cysteinyl-[protein] + hexadecanoate + H(+). In terms of biological role, hydrolyzes fatty acids from S-acylated cysteine residues in proteins with a strong preference for palmitoylated G-alpha proteins over other acyl substrates. Mediates the deacylation of G-alpha proteins such as GPA1 in vivo, but has weak or no activity toward palmitoylated Ras proteins. Has weak lysophospholipase activity in vitro; however such activity may not exist in vivo. In Candida albicans (strain SC5314 / ATCC MYA-2876) (Yeast), this protein is Acyl-protein thioesterase 1.